Reading from the N-terminus, the 347-residue chain is MRIEEDLKLGFKDVLFRPKRSTLKSRSQLSLTRQFTFKHTQTQWQGVPVIAANMDTVGSFAMARTLAGFEMMTAVHKHYSLEQWQAFVNSTDPTLLGHVMVSTGTSEDDFTKTRQILAMSTALRFICVDVANGYSQHFVEFLRKIREACPNHVILAGNVVTGEMVEELILSGADIVKVGIGPGSVCTTRVKTGVGYPQLSAIIECADAAHGLGGQIVGDGGCTCPGDVAKAFGGGADFVMLGGMLAAHEECGGEVVDVDGTPFMKFYGMSSSSAMDKHAGGVADYRASEGKTVLLPYRGPVENTVRDILGGVRSTCTYVGASQLKELTKRTTFIRVREQENNVYGKE.

D108 to A131 is a binding site for NADP(+). Residues G181 and G183 each coordinate K(+). The active-site Thioimidate intermediate is the C186. I216–V239 is a binding site for NADP(+).

Belongs to the IMPDH/GMPR family. GuaC type 1 subfamily. In terms of assembly, homotetramer.

The enzyme catalyses IMP + NH4(+) + NADP(+) = GMP + NADPH + 2 H(+). Functionally, catalyzes the irreversible NADPH-dependent deamination of GMP to IMP. It functions in the conversion of nucleobase, nucleoside and nucleotide derivatives of G to A nucleotides, and in maintaining the intracellular balance of A and G nucleotides. This chain is GMP reductase, found in Aeromonas salmonicida (strain A449).